We begin with the raw amino-acid sequence, 214 residues long: Adenylate kinase (214 aa).

10 to 15 (GAGKGT) contacts ATP. Residues 30–59 (STGDMLRAAVKAGSELGLKAKEIMDAGKLV) form an NMP region. AMP is bound by residues Thr-31, Arg-36, 57-59 (KLV), 85-88 (GFPR), and Gln-92. Residues 122–159 (GRRVHAASGRVYHVKFNPPKVEDKDDVTGEELTIRKDD) form an LID region. Residues Arg-123 and 132 to 133 (VY) each bind ATP. Positions 156 and 167 each coordinate AMP. Arg-200 contacts ATP.

The protein belongs to the adenylate kinase family. Monomer.

Its subcellular location is the cytoplasm. The catalysed reaction is AMP + ATP = 2 ADP. It participates in purine metabolism; AMP biosynthesis via salvage pathway; AMP from ADP: step 1/1. Functionally, catalyzes the reversible transfer of the terminal phosphate group between ATP and AMP. Plays an important role in cellular energy homeostasis and in adenine nucleotide metabolism. The protein is Adenylate kinase of Yersinia pseudotuberculosis serotype O:1b (strain IP 31758).